Consider the following 469-residue polypeptide: Acetyl-CoA decarbonylase/synthase complex subunit beta 1 (469 aa).

The [Ni-Fe-S] cluster site is built by Cys-189, Cys-192, Cys-278, and Cys-280.

It belongs to the CdhC family. In terms of assembly, monomer. The ACDS complex is made up of alpha, epsilon, beta, gamma and delta chains with a probable stoichiometry of (alpha(2)epsilon(2))(4)-beta(8)-(gamma(1)delta(1))(8) (Potential). It depends on [Ni-Fe-S] cluster as a cofactor.

It carries out the reaction Co(I)-[corrinoid Fe-S protein] + acetyl-CoA + H(+) = methyl-Co(III)-[corrinoid Fe-S protein] + CO + CoA. The protein operates within one-carbon metabolism; methanogenesis from acetate. Its function is as follows. Part of a complex that catalyzes the reversible cleavage of acetyl-CoA, allowing growth on acetate as sole source of carbon and energy. The alpha-epsilon complex generates CO from CO(2), while the beta subunit (this protein) combines the CO with CoA and a methyl group to form acetyl-CoA. The methyl group, which is incorporated into acetyl-CoA, is transferred to the beta subunit by a corrinoid iron-sulfur protein (the gamma-delta complex). This chain is Acetyl-CoA decarbonylase/synthase complex subunit beta 1 (cdhC1), found in Methanosarcina thermophila.